Here is a 279-residue protein sequence, read N- to C-terminus: NADPH-dependent 7-cyano-7-deazaguanine reductase (279 aa).

86 to 88 is a substrate binding site; sequence IES. 88-89 is an NADPH binding site; it reads SK. Cys-187 functions as the Thioimide intermediate in the catalytic mechanism. The active-site Proton donor is the Asp-194. Substrate is bound at residue 226–227; the sequence is HE. 255-256 contributes to the NADPH binding site; the sequence is RG.

It belongs to the GTP cyclohydrolase I family. QueF type 2 subfamily. As to quaternary structure, homodimer.

It is found in the cytoplasm. The enzyme catalyses 7-aminomethyl-7-carbaguanine + 2 NADP(+) = 7-cyano-7-deazaguanine + 2 NADPH + 3 H(+). It functions in the pathway tRNA modification; tRNA-queuosine biosynthesis. Catalyzes the NADPH-dependent reduction of 7-cyano-7-deazaguanine (preQ0) to 7-aminomethyl-7-deazaguanine (preQ1). The polypeptide is NADPH-dependent 7-cyano-7-deazaguanine reductase (Actinobacillus pleuropneumoniae serotype 5b (strain L20)).